An 87-amino-acid polypeptide reads, in one-letter code: Small ribosomal subunit protein bS16c (87 aa).

The protein belongs to the bacterial ribosomal protein bS16 family.

The protein resides in the plastid. It is found in the chloroplast. This is Small ribosomal subunit protein bS16c from Zygnema circumcarinatum (Green alga).